Reading from the N-terminus, the 419-residue chain is 3-isopropylmalate dehydratase large subunit (419 aa).

[4Fe-4S] cluster contacts are provided by cysteine 300, cysteine 360, and cysteine 363.

This sequence belongs to the aconitase/IPM isomerase family. LeuC type 2 subfamily. Heterodimer of LeuC and LeuD. Requires [4Fe-4S] cluster as cofactor.

It catalyses the reaction (2R,3S)-3-isopropylmalate = (2S)-2-isopropylmalate. Its pathway is amino-acid biosynthesis; L-leucine biosynthesis; L-leucine from 3-methyl-2-oxobutanoate: step 2/4. In terms of biological role, catalyzes the isomerization between 2-isopropylmalate and 3-isopropylmalate, via the formation of 2-isopropylmaleate. This Desulfatibacillum aliphaticivorans protein is 3-isopropylmalate dehydratase large subunit.